The chain runs to 381 residues: Terpene cyclase ATR13 (381 aa).

It belongs to the terpene synthase family.

It functions in the pathway mycotoxin biosynthesis. Functionally, terpene cyclase; part of the core atranone cluster (CAC) which products are predicted to catalyze most or all steps of mycotoxin atranone synthesis, starting from geranylgeranyl pyrophosphate (GGPP). The initial cyclization of GGPP to dolabellane is probably performed by the terpene cyclase ATR13. The Baeyer-Villiger oxidation near the end of the atranone synthesis, which converts atranones D and E to atranones F and G is predicted to be catalyzed by the monooxygenase ATR8. Of the CAC's other predicted gene products, the reducing PKS ATR6 might synthesize a polyketide chain. This polyketide is probably transferred onto the atranone backbone by the polyketide transferase ATR5. Other predicted CAC products include 4 oxygenases (ATR2, ATR3, ATR4, and ATR14), 3 short-chain reductases (ATR7, ATR9, and ATR10), and a methyltransferase (ATR12). These may all be involved in the various steps of atranone biosynthesis, although their specific roles must await experimental determination. This chain is Terpene cyclase ATR13, found in Stachybotrys chlorohalonatus (strain IBT 40285).